Consider the following 64-residue polypeptide: MNRDIYTQIETVGVLEKRVEKAGTFELKAAAMALAKAQRKLSVLLAKGMAELEDRLKIAELRTK.

In terms of biological role, transcription factor that regulates expression of phage structural components with protein P14. This Pseudoalteromonas phage PM2 (Bacteriophage PM2) protein is Transcription factor P13.